We begin with the raw amino-acid sequence, 151 residues long: Transcriptional repressor NrdR (151 aa).

Residues 3–34 (CPYCAYGESKVVDSRSTEDGSSIRRRRECLKC) fold into a zinc finger. An ATP-cone domain is found at 49–139 (ILVIKKNMSR…VYRQFKDINT (91 aa)).

This sequence belongs to the NrdR family. Zn(2+) is required as a cofactor.

Negatively regulates transcription of bacterial ribonucleotide reductase nrd genes and operons by binding to NrdR-boxes. This chain is Transcriptional repressor NrdR, found in Clostridium botulinum (strain ATCC 19397 / Type A).